The sequence spans 691 residues: Elongation factor G (691 aa).

Residues 12–286 (KKLRNIGIMA…GILEYLPSPL (275 aa)) form the tr-type G domain. GTP-binding positions include 21–28 (AHIDAGKT), 85–89 (DTPGH), and 139–142 (NKMD).

This sequence belongs to the TRAFAC class translation factor GTPase superfamily. Classic translation factor GTPase family. EF-G/EF-2 subfamily.

It localises to the cytoplasm. Functionally, catalyzes the GTP-dependent ribosomal translocation step during translation elongation. During this step, the ribosome changes from the pre-translocational (PRE) to the post-translocational (POST) state as the newly formed A-site-bound peptidyl-tRNA and P-site-bound deacylated tRNA move to the P and E sites, respectively. Catalyzes the coordinated movement of the two tRNA molecules, the mRNA and conformational changes in the ribosome. In Thermosipho africanus (strain TCF52B), this protein is Elongation factor G.